The sequence spans 363 residues: L-arabinitol 4-dehydrogenase (363 aa).

C53, H78, E79, C108, C111, C114, C122, and E163 together coordinate Zn(2+). Residues 190-191, D211, R216, I282, and 306-308 each bind NAD(+); these read PI and QYR.

Belongs to the zinc-containing alcohol dehydrogenase family. As to quaternary structure, homotetramer. Zn(2+) serves as cofactor.

The catalysed reaction is L-arabinitol + NAD(+) = L-xylulose + NADH + H(+). It functions in the pathway carbohydrate degradation; L-arabinose degradation via L-arabinitol; D-xylulose 5-phosphate from L-arabinose (fungal route): step 2/5. Catalyzes the NAD-dependent oxidation of L-arabinitol to L-xylulose in the fungal L-arabinose catabolic pathway. L-arabinose catabolism is important for using plant material as a carbon source. Not active on D-arabinitol, D-sorbitol and D-mannitol. The sequence is that of L-arabinitol 4-dehydrogenase (ard-1) from Neurospora crassa (strain ATCC 24698 / 74-OR23-1A / CBS 708.71 / DSM 1257 / FGSC 987).